The sequence spans 149 residues: Histone H3-like 1 (149 aa).

Basic and acidic residues predominate over residues 1 to 19 (MARPRKEAPQRNLDRDENA). The disordered stretch occupies residues 1–58 (MARPRKEAPQRNLDRDENARQQPTEEPQDEAPRNQGRQQQQQRPPAAPRRPRRFRPGT). Positions 33-44 (RNQGRQQQQQRP) are enriched in low complexity.

The protein belongs to the histone H3 family. As to quaternary structure, the nucleosome is a histone octamer containing two molecules each of H2A, H2B, H3 and H4 assembled in one H3-H4 heterotetramer and two H2A-H2B heterodimers. The octamer wraps approximately 147 bp of DNA. In terms of tissue distribution, pollen specific.

The protein resides in the nucleus. It is found in the chromosome. Core component of nucleosome. Nucleosomes wrap and compact DNA into chromatin, limiting DNA accessibility to the cellular machineries which require DNA as a template. Histones thereby play a central role in transcription regulation, DNA repair, DNA replication and chromosomal stability. DNA accessibility is regulated via a complex set of post-translational modifications of histones, also called histone code, and nucleosome remodeling. The chain is Histone H3-like 1 (gH3) from Lilium longiflorum (Trumpet lily).